A 128-amino-acid chain; its full sequence is Large ribosomal subunit protein eL22 (128 aa).

At threonine 62 the chain carries Phosphothreonine. Serine 66 carries the post-translational modification Phosphoserine. Lysine 69 carries the post-translational modification N6-succinyllysine.

This sequence belongs to the eukaryotic ribosomal protein eL22 family. In terms of assembly, component of the large ribosomal subunit.

It is found in the cytoplasm. In terms of biological role, component of the large ribosomal subunit. The ribosome is a large ribonucleoprotein complex responsible for the synthesis of proteins in the cell. This is Large ribosomal subunit protein eL22 (RPL22) from Sus scrofa (Pig).